The primary structure comprises 294 residues: Lipoyl synthase 1 (294 aa).

Cysteine 38, cysteine 43, cysteine 49, cysteine 64, cysteine 68, cysteine 71, and serine 279 together coordinate [4Fe-4S] cluster. Residues 50–268 form the Radical SAM core domain; that stretch reads FAGGTATFLI…EEGQTRFGFL (219 aa).

This sequence belongs to the radical SAM superfamily. Lipoyl synthase family. [4Fe-4S] cluster serves as cofactor.

The protein localises to the cytoplasm. It carries out the reaction [[Fe-S] cluster scaffold protein carrying a second [4Fe-4S](2+) cluster] + N(6)-octanoyl-L-lysyl-[protein] + 2 oxidized [2Fe-2S]-[ferredoxin] + 2 S-adenosyl-L-methionine + 4 H(+) = [[Fe-S] cluster scaffold protein] + N(6)-[(R)-dihydrolipoyl]-L-lysyl-[protein] + 4 Fe(3+) + 2 hydrogen sulfide + 2 5'-deoxyadenosine + 2 L-methionine + 2 reduced [2Fe-2S]-[ferredoxin]. Its pathway is protein modification; protein lipoylation via endogenous pathway; protein N(6)-(lipoyl)lysine from octanoyl-[acyl-carrier-protein]: step 2/2. Its function is as follows. Catalyzes the radical-mediated insertion of two sulfur atoms into the C-6 and C-8 positions of the octanoyl moiety bound to the lipoyl domains of lipoate-dependent enzymes, thereby converting the octanoylated domains into lipoylated derivatives. The sequence is that of Lipoyl synthase 1 from Prochlorococcus marinus (strain SARG / CCMP1375 / SS120).